Consider the following 463-residue polypeptide: Chromosomal replication initiator protein DnaA (463 aa).

A domain I, interacts with DnaA modulators region spans residues 1–83 (MSTNQIILTD…LQLFQHYNNT (83 aa)). The interval 83–124 (TIKSIEIITKELPGTTQTVIELPTKTFADIGSSELNSENIFS) is domain II. A domain III, AAA+ region region spans residues 125–343 (TLDVRFTFDN…GALNKVIAHS (219 aa)). Residues G171, G173, K174, and T175 each coordinate ATP. The domain IV, binds dsDNA stretch occupies residues 344–463 (NFTLKEITLE…INLLMKILQN (120 aa)).

It belongs to the DnaA family. Oligomerizes as a right-handed, spiral filament on DNA at oriC.

It localises to the cytoplasm. In terms of biological role, plays an essential role in the initiation and regulation of chromosomal replication. ATP-DnaA binds to the origin of replication (oriC) to initiate formation of the DNA replication initiation complex once per cell cycle. Binds the DnaA box (a 9 base pair repeat at the origin) and separates the double-stranded (ds)DNA. Forms a right-handed helical filament on oriC DNA; dsDNA binds to the exterior of the filament while single-stranded (ss)DNA is stabiized in the filament's interior. The ATP-DnaA-oriC complex binds and stabilizes one strand of the AT-rich DNA unwinding element (DUE), permitting loading of DNA polymerase. After initiation quickly degrades to an ADP-DnaA complex that is not apt for DNA replication. Binds acidic phospholipids. This Rickettsia felis (strain ATCC VR-1525 / URRWXCal2) (Rickettsia azadi) protein is Chromosomal replication initiator protein DnaA.